The primary structure comprises 238 residues: tRNA (guanine-N(7)-)-methyltransferase (238 aa).

Residues Glu-70, Asp-95, Asp-122, and Asp-145 each coordinate S-adenosyl-L-methionine. The active site involves Asp-145. Substrate contacts are provided by residues Lys-149, Asp-181, and 216 to 219 (TKFE).

This sequence belongs to the class I-like SAM-binding methyltransferase superfamily. TrmB family.

The enzyme catalyses guanosine(46) in tRNA + S-adenosyl-L-methionine = N(7)-methylguanosine(46) in tRNA + S-adenosyl-L-homocysteine. It participates in tRNA modification; N(7)-methylguanine-tRNA biosynthesis. Its function is as follows. Catalyzes the formation of N(7)-methylguanine at position 46 (m7G46) in tRNA. In Neisseria meningitidis serogroup B (strain ATCC BAA-335 / MC58), this protein is tRNA (guanine-N(7)-)-methyltransferase.